We begin with the raw amino-acid sequence, 60 residues long: Light-harvesting protein B-800/850 alpha chain (60 aa).

The Cytoplasmic segment spans residues 1–14 (MNNAKIWTVVKPST). A helical membrane pass occupies residues 15–35 (GIPLILGAVAVAALIVHAGLL). Residue H31 participates in a bacteriochlorophyll binding. The Periplasmic portion of the chain corresponds to 36–60 (TNTTWFANYWNGNPMATVVAVAPAQ).

This sequence belongs to the antenna complex alpha subunit family. As to quaternary structure, the core complex is formed by different alpha and beta chains, binding bacteriochlorophyll molecules, and arranged most probably in tetrameric structures disposed around the reaction center. The non-pigmented gamma chains may constitute additional components.

The protein localises to the cell inner membrane. Functionally, antenna complexes are light-harvesting systems, which transfer the excitation energy to the reaction centers. This chain is Light-harvesting protein B-800/850 alpha chain (pucA), found in Rhodobacter capsulatus (Rhodopseudomonas capsulata).